A 261-amino-acid polypeptide reads, in one-letter code: Proline-rich protein HaeIII subfamily 1 (261 aa).

A signal peptide spans 1 to 15; the sequence is MLVVLFTVALLALSS. The tract at residues 15-261 is disordered; sequence SAQGPREENQ…PPQGRPQGPR (247 aa). Pro residues-rich tracts occupy residues 32 to 44 and 51 to 237; these read QRPP…PRPP and GPPP…PPTG. Positions 238–261 are enriched in low complexity; that stretch reads GPQQTPPLAGNTQGPPQGRPQGPR.

The protein resides in the secreted. In Mus musculus (Mouse), this protein is Proline-rich protein HaeIII subfamily 1 (Prh1).